Here is a 585-residue protein sequence, read N- to C-terminus: A-type ATP synthase subunit A (585 aa).

Gly-231–Thr-238 contacts ATP.

The protein belongs to the ATPase alpha/beta chains family. In terms of assembly, has multiple subunits with at least A(3), B(3), C, D, E, F, H, I and proteolipid K(x).

The protein resides in the cell membrane. The enzyme catalyses ATP + H2O + 4 H(+)(in) = ADP + phosphate + 5 H(+)(out). In terms of biological role, produces ATP from ADP in the presence of a proton gradient across the membrane. The archaeal alpha chain is a catalytic subunit. Functionally, component of the A-type ATP synthase that produces ATP from ADP in the presence of a proton gradient across the membrane. The A chain is the catalytic subunit. This chain is A-type ATP synthase subunit A, found in Thermococcus kodakarensis (strain ATCC BAA-918 / JCM 12380 / KOD1) (Pyrococcus kodakaraensis (strain KOD1)).